The primary structure comprises 596 residues: 3-hydroxy-3-methylglutaryl-coenzyme A reductase 1 (596 aa).

The disordered stretch occupies residues 1 to 29; it reads MDVRRRPVKPLYTSKDASAGEPLKQQEVS. 2 consecutive transmembrane segments (helical) span residues 41-61 and 83-103; these read LYLT…FLLV and AMVS…IGFV. A linker region spans residues 104-183; that stretch reads QSFVSRSNSD…SPIIMPALSE (80 aa). A catalytic region spans residues 184–596; sequence DDEEIIQSVV…YNRSIKDISK (413 aa). The Charge relay system role is filled by Glu-278. Residue Asn-342 is glycosylated (N-linked (GlcNAc...) asparagine). Catalysis depends on Lys-410, which acts as the Charge relay system. Asn-455 carries an N-linked (GlcNAc...) asparagine glycan. Asp-486 acts as the Charge relay system in catalysis. His-584 acts as the Proton donor in catalysis. Asn-588 carries N-linked (GlcNAc...) asparagine glycosylation.

Belongs to the HMG-CoA reductase family. As to expression, expressed in flower primordia and anthers.

It is found in the endoplasmic reticulum membrane. The catalysed reaction is (R)-mevalonate + 2 NADP(+) + CoA = (3S)-3-hydroxy-3-methylglutaryl-CoA + 2 NADPH + 2 H(+). It functions in the pathway metabolic intermediate biosynthesis; (R)-mevalonate biosynthesis; (R)-mevalonate from acetyl-CoA: step 3/3. Functionally, catalyzes the synthesis of mevalonate. The specific precursor of all isoprenoid compounds present in plants. This is 3-hydroxy-3-methylglutaryl-coenzyme A reductase 1 (HMG1) from Solanum tuberosum (Potato).